The sequence spans 357 residues: Peptide chain release factor 1 (357 aa).

Gln233 is modified (N5-methylglutamine).

This sequence belongs to the prokaryotic/mitochondrial release factor family. In terms of processing, methylated by PrmC. Methylation increases the termination efficiency of RF1.

Its subcellular location is the cytoplasm. Peptide chain release factor 1 directs the termination of translation in response to the peptide chain termination codons UAG and UAA. In Flavobacterium psychrophilum (strain ATCC 49511 / DSM 21280 / CIP 103535 / JIP02/86), this protein is Peptide chain release factor 1.